A 447-amino-acid polypeptide reads, in one-letter code: Ribosomal protein uS12 methylthiotransferase RimO (447 aa).

The MTTase N-terminal domain maps to 4–114; it reads PKVGFVSLGC…VMEAVHEYVP (111 aa). 6 residues coordinate [4Fe-4S] cluster: cysteine 13, cysteine 49, cysteine 78, cysteine 147, cysteine 151, and cysteine 154. The Radical SAM core domain occupies 133–370; that stretch reads LTPKHYAYLK…MQVQQQISAA (238 aa). The region spanning 373–443 is the TRAM domain; the sequence is QKRIGQTMTV…EYDLFAKLIK (71 aa).

The protein belongs to the methylthiotransferase family. RimO subfamily. It depends on [4Fe-4S] cluster as a cofactor.

The protein localises to the cytoplasm. The catalysed reaction is L-aspartate(89)-[ribosomal protein uS12]-hydrogen + (sulfur carrier)-SH + AH2 + 2 S-adenosyl-L-methionine = 3-methylsulfanyl-L-aspartate(89)-[ribosomal protein uS12]-hydrogen + (sulfur carrier)-H + 5'-deoxyadenosine + L-methionine + A + S-adenosyl-L-homocysteine + 2 H(+). Its function is as follows. Catalyzes the methylthiolation of an aspartic acid residue of ribosomal protein uS12. This chain is Ribosomal protein uS12 methylthiotransferase RimO, found in Acinetobacter baumannii (strain AB0057).